We begin with the raw amino-acid sequence, 285 residues long: 4-diphosphocytidyl-2-C-methyl-D-erythritol kinase (285 aa).

Lys14 is a catalytic residue. Residue 97–107 coordinates ATP; that stretch reads PMGGGIGGGSS. Asp139 is an active-site residue.

Belongs to the GHMP kinase family. IspE subfamily.

The enzyme catalyses 4-CDP-2-C-methyl-D-erythritol + ATP = 4-CDP-2-C-methyl-D-erythritol 2-phosphate + ADP + H(+). It participates in isoprenoid biosynthesis; isopentenyl diphosphate biosynthesis via DXP pathway; isopentenyl diphosphate from 1-deoxy-D-xylulose 5-phosphate: step 3/6. In terms of biological role, catalyzes the phosphorylation of the position 2 hydroxy group of 4-diphosphocytidyl-2C-methyl-D-erythritol. This Tolumonas auensis (strain DSM 9187 / NBRC 110442 / TA 4) protein is 4-diphosphocytidyl-2-C-methyl-D-erythritol kinase.